A 727-amino-acid polypeptide reads, in one-letter code: Pollen-specific leucine-rich repeat extensin-like protein 3 (727 aa).

A signal peptide spans 1-22 (MPHIYKQPLGIFQGFVPTLTDA). An LRR 1 repeat occupies 19-43 (LTDAEVSFIAQRQLLTLPENGELPD). Asparagine 80 carries N-linked (GlcNAc...) asparagine glycosylation. LRR repeat units lie at residues 107–131 (VAVVAGVDLNGADIAGHLPAELGLM), 132–154 (TDVAMFHLNSNRFCGIIPKSFEK), 156–179 (SLMHEFDVSNNRFVGPFPSVVLSW), 180–202 (PAVKFIDVRYNDFEGQVPPELFK), 203–226 (KDLDAIFLNNNRFTSTIPDSLGES), 228–249 (ASVVTFAHNKFSGCIPRSIGNM), 250–273 (KNLNEIIFKDNSLGGCFPSEIGKL), 275–296 (NVNVFDASMNSFTGVLPPSFVG), and 297–321 (LTSMEEFDISGNKLTGFIPENICKL). N-linked (GlcNAc...) asparagine glycosylation is present at asparagine 326. Residues 381–727 (SKDKCAGGSS…SPPPPMFQGY (347 aa)) form a disordered region. Composition is skewed to pro residues over residues 397–419 (SPSPVPTRPVHKPQPPKESPQPN), 446–457 (SPPPASSPPTSP), 466–479 (VHKPQPPKESPQPN), 492–677 (SPPP…PKMS), and 718–727 (SPPPPMFQGY). A contains the Ser-Pro(4) repeats region spans residues 432–727 (SPPPPQQPHH…SPPPPMFQGY (296 aa)).

Hydroxylated on proline residues in the S-P-P-P-P repeat. In terms of processing, O-glycosylated on hydroxyprolines. In terms of tissue distribution, expressed in flowers, stamen, pollen, and pollinated carpels.

It is found in the secreted. The protein resides in the cell wall. Functionally, modulates cell morphogenesis by regulating cell wall formation and assembly, and/or growth polarization. The polypeptide is Pollen-specific leucine-rich repeat extensin-like protein 3 (PEX3) (Arabidopsis thaliana (Mouse-ear cress)).